A 1717-amino-acid chain; its full sequence is PH domain leucine-rich repeat-containing protein phosphatase 1 (1717 aa).

Methionine 1 carries the N-acetylmethionine modification. 4 disordered regions span residues methionine 1–alanine 25, leucine 41–serine 118, alanine 136–glycine 156, and proline 252–threonine 470. Over residues alanine 98–proline 110 the composition is skewed to low complexity. Residues glutamate 262–proline 274 show a composition bias toward pro residues. 2 stretches are compositionally biased toward low complexity: residues serine 313 to proline 325 and proline 333 to serine 345. Serine 317 carries the phosphoserine modification. Polar residues-rich tracts occupy residues aspartate 346–serine 358 and glutamine 408–glutamine 417. Serine 412 is modified (phosphoserine). The 101-residue stretch at arginine 536–serine 636 folds into the PH domain. LRR repeat units lie at residues arginine 638 to serine 659, aspartate 661 to arginine 682, lysine 692 to serine 712, threonine 715 to methionine 736, asparagine 738 to lysine 760, glutamine 761 to threonine 783, alanine 784 to arginine 804, histidine 808 to glutamine 831, histidine 832 to asparagine 853, phenylalanine 873 to asparagine 894, tyrosine 895 to serine 916, lysine 918 to asparagine 939, serine 941 to threonine 962, serine 963 to lysine 984, serine 987 to glutamate 1008, isoleucine 1013 to threonine 1033, histidine 1037 to lysine 1058, glutamate 1061 to cysteine 1082, arginine 1084 to proline 1105, glutamate 1106 to proline 1127, and lysine 1129 to leucine 1150. Residues proline 1076–leucine 1205 form an interaction with NHERF1 region. Residues serine 1175–leucine 1422 enclose the PPM-type phosphatase domain. The Mn(2+) site is built by aspartate 1210, glycine 1211, lysine 1374, and aspartate 1413. Disordered stretches follow at residues aspartate 1458–tyrosine 1510 and glutamate 1673–leucine 1717. A compositionally biased stretch (low complexity) spans serine 1468–glutamate 1489. Positions threonine 1715–leucine 1717 match the PDZ-binding; required for interaction with NHERF1 motif.

In terms of assembly, interacts with the nucleotide free form of K-Ras (KRAS) via its LRR repeats. Interacts with AKT2, AKT3, PRKCB isoform beta-II, STK4, RPS6KB1, RAF1. Isoform 1 (predominantly) and isoform 2 interact with BRAP. Interacts with FKBP5; FKBP5 acts as a scaffold for PHLPP1 and Akt. Interacts with SCRIB; SCRIB acts as a scaffold for PHLPP1 and Akt. Interacts with NHERF1; NHERF1 scaffolds a heterotrimeric complex with PTEN at the plasma membrane. Interacts with WDR48 and USP12. It depends on Mn(2+) as a cofactor. In colorectal cancer tissue, expression is highest in the surface epithelium of normal colonic mucosa adjacent to the cancer tissue but is largely excluded from the crypt bases. Expression is lost or significantly decreased in 78% of tested tumors (at protein level). Ubiquitously expressed in non-cancerous tissues.

The protein localises to the cytoplasm. Its subcellular location is the membrane. It is found in the nucleus. It localises to the cell membrane. It carries out the reaction O-phospho-L-seryl-[protein] + H2O = L-seryl-[protein] + phosphate. The catalysed reaction is O-phospho-L-threonyl-[protein] + H2O = L-threonyl-[protein] + phosphate. Its activity is regulated as follows. Insensitive to okadaic acid. Deubiquitination by WDR48-USP12 complex positively regulates PHLPP1 stability. Protein phosphatase involved in regulation of Akt and PKC signaling. Mediates dephosphorylation in the C-terminal domain hydrophobic motif of members of the AGC Ser/Thr protein kinase family; specifically acts on 'Ser-473' of AKT2 and AKT3, 'Ser-660' of PRKCB and 'Ser-657' of PRKCA. Isoform 2 seems to have a major role in regulating Akt signaling in hippocampal neurons. Akt regulates the balance between cell survival and apoptosis through a cascade that primarily alters the function of transcription factors that regulate pro- and antiapoptotic genes. Dephosphorylation of 'Ser-473' of Akt triggers apoptosis and suppression of tumor growth. Dephosphorylation of PRKCA and PRKCB leads to their destabilization and degradation. Dephosphorylates STK4 on 'Thr-387' leading to STK4 activation and apoptosis. Dephosphorylates RPS6KB1 and is involved in regulation of cap-dependent translation. Inhibits cancer cell proliferation and may act as a tumor suppressor. Dephosphorylates RAF1 inhibiting its kinase activity. May act as a negative regulator of K-Ras signaling in membrane rafts. Involved in the hippocampus-dependent long-term memory formation. Involved in circadian control by regulating the consolidation of circadian periodicity after resetting. Involved in development and function of regulatory T-cells. The polypeptide is PH domain leucine-rich repeat-containing protein phosphatase 1 (PHLPP1) (Homo sapiens (Human)).